We begin with the raw amino-acid sequence, 66 residues long: Small ribosomal subunit protein bS21 (66 aa).

This sequence belongs to the bacterial ribosomal protein bS21 family.

The sequence is that of Small ribosomal subunit protein bS21 from Solidesulfovibrio magneticus (strain ATCC 700980 / DSM 13731 / RS-1) (Desulfovibrio magneticus).